The following is a 663-amino-acid chain: UvrABC system protein B (663 aa).

Positions 26 to 414 (DGLESGLAKQ…DNVAEQVVRP (389 aa)) constitute a Helicase ATP-binding domain. Residue 39–46 (GVTGSGKT) participates in ATP binding. The Beta-hairpin motif lies at 92–115 (YYDYYQPEAYVPASDTFIEKDASI). In terms of domain architecture, Helicase C-terminal spans 430 to 596 (QVDDLMSEIR…GINKSVEDIL (167 aa)). In terms of domain architecture, UVR spans 624-659 (AKEINALEKQMYAHAQNMEFELAAKIRDEYLLLKEQ).

This sequence belongs to the UvrB family. Forms a heterotetramer with UvrA during the search for lesions. Interacts with UvrC in an incision complex.

The protein localises to the cytoplasm. In terms of biological role, the UvrABC repair system catalyzes the recognition and processing of DNA lesions. A damage recognition complex composed of 2 UvrA and 2 UvrB subunits scans DNA for abnormalities. Upon binding of the UvrA(2)B(2) complex to a putative damaged site, the DNA wraps around one UvrB monomer. DNA wrap is dependent on ATP binding by UvrB and probably causes local melting of the DNA helix, facilitating insertion of UvrB beta-hairpin between the DNA strands. Then UvrB probes one DNA strand for the presence of a lesion. If a lesion is found the UvrA subunits dissociate and the UvrB-DNA preincision complex is formed. This complex is subsequently bound by UvrC and the second UvrB is released. If no lesion is found, the DNA wraps around the other UvrB subunit that will check the other stand for damage. This chain is UvrABC system protein B, found in Legionella pneumophila (strain Paris).